Reading from the N-terminus, the 377-residue chain is Citrate synthase (377 aa).

Active-site residues include His-220, His-259, and Asp-313.

Belongs to the citrate synthase family. In terms of assembly, homodimer.

It catalyses the reaction oxaloacetate + acetyl-CoA + H2O = citrate + CoA + H(+). The protein operates within carbohydrate metabolism; tricarboxylic acid cycle; isocitrate from oxaloacetate: step 1/2. Might regulate the synthesis and function of enzymes involved in later enzymatic steps of Krebs cycle. Loss in activity results in sporulation defect. This chain is Citrate synthase (gltA), found in Deinococcus radiodurans (strain ATCC 13939 / DSM 20539 / JCM 16871 / CCUG 27074 / LMG 4051 / NBRC 15346 / NCIMB 9279 / VKM B-1422 / R1).